Reading from the N-terminus, the 250-residue chain is Histone H1.1 (250 aa).

Over residues 1 to 11 (MSDSAVATSAS) the composition is skewed to polar residues. Disordered regions lie at residues 1-52 (MSDS…QQMV) and 104-250 (QTKG…ATKK). In terms of domain architecture, H15 spans 44–118 (SHPPTQQMVD…GASGSFKLSA (75 aa)). Residues 122–133 (KDAKPKASAVEK) show a composition bias toward basic and acidic residues. Residues 140–161 (ASAARATKSKSSTSTTKKAAGA) are compositionally biased toward low complexity. A compositionally biased stretch (basic and acidic residues) spans 174-191 (KNVEKKKADKEKAKDAKK). Over residues 192 to 234 (TGTIKAKPTTAKAKSSATKPKTPKPKTTSAKPKKVVSATTPKK) the composition is skewed to low complexity. Residues 235 to 250 (TAVKKPKAKTASATKK) are compositionally biased toward basic residues.

This sequence belongs to the histone H1/H5 family.

It localises to the nucleus. Its subcellular location is the chromosome. Histones H1 are necessary for the condensation of nucleosome chains into higher-order structures. This is Histone H1.1 (His1.1) from Drosophila virilis (Fruit fly).